Reading from the N-terminus, the 704-residue chain is Elongation factor G (704 aa).

A tr-type G domain is found at 8-290 (ARYRNIGISA…AVVDYLPSPV (283 aa)). GTP is bound by residues 17 to 24 (AHIDAGKT), 88 to 92 (DTPGH), and 142 to 145 (NKMD).

It belongs to the TRAFAC class translation factor GTPase superfamily. Classic translation factor GTPase family. EF-G/EF-2 subfamily.

The protein localises to the cytoplasm. In terms of biological role, catalyzes the GTP-dependent ribosomal translocation step during translation elongation. During this step, the ribosome changes from the pre-translocational (PRE) to the post-translocational (POST) state as the newly formed A-site-bound peptidyl-tRNA and P-site-bound deacylated tRNA move to the P and E sites, respectively. Catalyzes the coordinated movement of the two tRNA molecules, the mRNA and conformational changes in the ribosome. The chain is Elongation factor G from Pectobacterium carotovorum subsp. carotovorum (strain PC1).